The following is a 416-amino-acid chain: Serine hydroxymethyltransferase (416 aa).

Residues L121 and G125–L127 each bind (6S)-5,6,7,8-tetrahydrofolate. K229 bears the N6-(pyridoxal phosphate)lysine mark.

This sequence belongs to the SHMT family. In terms of assembly, homodimer. Pyridoxal 5'-phosphate is required as a cofactor.

It is found in the cytoplasm. It carries out the reaction (6R)-5,10-methylene-5,6,7,8-tetrahydrofolate + glycine + H2O = (6S)-5,6,7,8-tetrahydrofolate + L-serine. It participates in one-carbon metabolism; tetrahydrofolate interconversion. It functions in the pathway amino-acid biosynthesis; glycine biosynthesis; glycine from L-serine: step 1/1. Catalyzes the reversible interconversion of serine and glycine with tetrahydrofolate (THF) serving as the one-carbon carrier. This reaction serves as the major source of one-carbon groups required for the biosynthesis of purines, thymidylate, methionine, and other important biomolecules. Also exhibits THF-independent aldolase activity toward beta-hydroxyamino acids, producing glycine and aldehydes, via a retro-aldol mechanism. In Aromatoleum aromaticum (strain DSM 19018 / LMG 30748 / EbN1) (Azoarcus sp. (strain EbN1)), this protein is Serine hydroxymethyltransferase.